Consider the following 150-residue polypeptide: MSWQSYVDDSLVGSGFMHSAAIVGLADGSYWAYGGTYVPQPEEVTHILKCLENFSLVQSSGVTICGVKFFGLQSGSEGQMKYIFFKKGAAGGCIYTSKQTAIIAVYGNPGDASALQQDLQKTEATYVAVNPADCNTTVKRIAEYLISLDY.

Belongs to the profilin family. Occurs in many kinds of cells as a complex with monomeric actin in a 1:1 ratio.

Its subcellular location is the cytoplasm. The protein localises to the cytoskeleton. Functionally, binds to actin and affects the structure of the cytoskeleton. At high concentrations, profilin prevents the polymerization of actin, whereas it enhances it at low concentrations. By binding to PIP2, it inhibits the formation of IP3 and DG. This Trypanosoma brucei brucei protein is Profilin.